Here is a 452-residue protein sequence, read N- to C-terminus: Pup--protein ligase (452 aa).

Position 9 (Glu-9) interacts with Mg(2+). Arg-53 contributes to the ATP binding site. Tyr-55 is a binding site for Mg(2+). The Proton acceptor role is filled by Asp-57. Glu-63 contributes to the Mg(2+) binding site. Positions 66 and 419 each coordinate ATP.

Belongs to the Pup ligase/Pup deamidase family. Pup-conjugating enzyme subfamily.

It catalyses the reaction ATP + [prokaryotic ubiquitin-like protein]-L-glutamate + [protein]-L-lysine = ADP + phosphate + N(6)-([prokaryotic ubiquitin-like protein]-gamma-L-glutamyl)-[protein]-L-lysine.. It participates in protein degradation; proteasomal Pup-dependent pathway. Its pathway is protein modification; protein pupylation. Functionally, catalyzes the covalent attachment of the prokaryotic ubiquitin-like protein modifier Pup to the proteasomal substrate proteins, thereby targeting them for proteasomal degradation. This tagging system is termed pupylation. The ligation reaction involves the side-chain carboxylate of the C-terminal glutamate of Pup and the side-chain amino group of a substrate lysine. The sequence is that of Pup--protein ligase from Mycobacterium avium (strain 104).